We begin with the raw amino-acid sequence, 151 residues long: 3-hydroxyacyl-[acyl-carrier-protein] dehydratase FabZ (151 aa).

The active site involves histidine 54.

It belongs to the thioester dehydratase family. FabZ subfamily.

Its subcellular location is the cytoplasm. The catalysed reaction is a (3R)-hydroxyacyl-[ACP] = a (2E)-enoyl-[ACP] + H2O. Involved in unsaturated fatty acids biosynthesis. Catalyzes the dehydration of short chain beta-hydroxyacyl-ACPs and long chain saturated and unsaturated beta-hydroxyacyl-ACPs. The sequence is that of 3-hydroxyacyl-[acyl-carrier-protein] dehydratase FabZ from Cronobacter sakazakii (strain ATCC BAA-894) (Enterobacter sakazakii).